We begin with the raw amino-acid sequence, 137 residues long: TSC22 domain family protein 3 (137 aa).

The segment at 1 to 60 is AP1-binding; sequence MNTEMYQTPMEVAVYQLHNFSISFFSSLLGGDVVSVKLDNSASGASVVALDNKIEQAMDL. Residues Asn-40 and Val-73 each carry the phosphoserine modification. Residues 76–97 form a leucine-zipper region; sequence LKEQIRELLEKNSQLERENTLL. The segment at 101-137 is disordered; that stretch reads ASPEQLEKFQSRLSPEEPAPEAPETPETPEAPGGSAV. Ser-102 is subject to Phosphoserine. 2 positions are modified to phosphothreonine: Thr-125 and Thr-128. The span at 128-137 shows a compositional bias: low complexity; that stretch reads TPEAPGGSAV.

This sequence belongs to the TSC-22/Dip/Bun family. In terms of assembly, can form homodimers, however it is likely to function as a monomer. Interacts with NFKB1. Interacts (via N-terminus) with JUN and FOS; these interactions inhibit the binding of active AP1 to its target DNA. Interacts with MYOD1. Interacts with HDAC1; this interaction affects HDAC1 activity on MYOG promoter and thus inhibits MYOD1 transcriptional activity. As to quaternary structure, interacts with MYOD1. In terms of tissue distribution, expressed in T-cells. Expression inversely correlates with T-cell activation, being higher in resting cells and lower in cells activated by TCR/CD3 triggering (at protein level). Constitutively expressed in lung, intestine, kidney and liver, most probably by resident cells from the macrophage lineage. Expressed in thymus, lymph nodes, bone marrow, spleen, lung and skeletal muscle. As to expression, expressed in spleen and skeletal muscle (at protein level). Expressed in the cortex, medulla and papilla of the kidney. Expressed in the cortex, medulla and papilla of the kidney. In terms of tissue distribution, expressed in spleen and skeletal muscle (at protein level).

It localises to the cytoplasm. The protein localises to the nucleus. Functionally, protects T-cells from IL2 deprivation-induced apoptosis through the inhibition of FOXO3A transcriptional activity that leads to the down-regulation of the pro-apoptotic factor BCL2L11. In macrophages, plays a role in the anti-inflammatory and immunosuppressive effects of glucocorticoids and IL10. In T-cells, inhibits anti-CD3-induced NFKB1 nuclear translocation and thereby NFKB1 DNA-binding activities. In vitro, suppresses AP-1 transcription factor complex DNA-binding activities. In terms of biological role, inhibits myogenic differentiation and mediates anti-myogenic effects of glucocorticoids by binding and regulating MYOD1 and HDAC1 transcriptional activity resulting in reduced expression of MYOG. This is TSC22 domain family protein 3 from Mus musculus (Mouse).